A 563-amino-acid chain; its full sequence is Arginine--tRNA ligase (563 aa).

The short motif at 121-131 is the 'HIGH' region element; it reads PNIAKPFSIGH.

This sequence belongs to the class-I aminoacyl-tRNA synthetase family. As to quaternary structure, monomer.

It localises to the cytoplasm. The catalysed reaction is tRNA(Arg) + L-arginine + ATP = L-arginyl-tRNA(Arg) + AMP + diphosphate. This Streptococcus pneumoniae (strain ATCC BAA-255 / R6) protein is Arginine--tRNA ligase.